A 156-amino-acid polypeptide reads, in one-letter code: Small ribosomal subunit protein uS7 (156 aa).

The protein belongs to the universal ribosomal protein uS7 family. Part of the 30S ribosomal subunit. Contacts proteins S9 and S11.

One of the primary rRNA binding proteins, it binds directly to 16S rRNA where it nucleates assembly of the head domain of the 30S subunit. Is located at the subunit interface close to the decoding center, probably blocks exit of the E-site tRNA. The polypeptide is Small ribosomal subunit protein uS7 (Mycoplasmopsis synoviae (strain 53) (Mycoplasma synoviae)).